Reading from the N-terminus, the 227-residue chain is Urease accessory protein UreF (227 aa).

It belongs to the UreF family. As to quaternary structure, ureD, UreF and UreG form a complex that acts as a GTP-hydrolysis-dependent molecular chaperone, activating the urease apoprotein by helping to assemble the nickel containing metallocenter of UreC. The UreE protein probably delivers the nickel.

It localises to the cytoplasm. In terms of biological role, required for maturation of urease via the functional incorporation of the urease nickel metallocenter. This chain is Urease accessory protein UreF, found in Actinobacillus pleuropneumoniae serotype 5b (strain L20).